A 173-amino-acid chain; its full sequence is UPF0398 protein SMU_470 (173 aa).

The protein belongs to the UPF0398 family.

The protein is UPF0398 protein SMU_470 of Streptococcus mutans serotype c (strain ATCC 700610 / UA159).